Consider the following 312-residue polypeptide: Serine/threonine-protein kinase ppk11 (312 aa).

The Protein kinase domain occupies 6 to 258 (YRDLQLIGQG…AEYLSKHKFI (253 aa)). Residues 12–20 (IGQGSFGSV) and K35 contribute to the ATP site. The active-site Proton acceptor is D127.

This sequence belongs to the protein kinase superfamily. Ser/Thr protein kinase family.

The protein resides in the cytoplasm. The protein localises to the nucleus. It catalyses the reaction L-seryl-[protein] + ATP = O-phospho-L-seryl-[protein] + ADP + H(+). The catalysed reaction is L-threonyl-[protein] + ATP = O-phospho-L-threonyl-[protein] + ADP + H(+). In Schizosaccharomyces pombe (strain 972 / ATCC 24843) (Fission yeast), this protein is Serine/threonine-protein kinase ppk11 (ppk11).